The primary structure comprises 359 residues: GalNAc-alpha-(1-&gt;4)-GalNAc-alpha-(1-&gt;3)-diNAcBac-PP-undecaprenol alpha-1,4-N-acetyl-D-galactosaminyltransferase (359 aa).

Glu-17 lines the substrate pocket. Tyr-45 contacts UDP-N-acetyl-alpha-D-galactosamine. 71–74 contacts substrate; that stretch reads RFKK. UDP-N-acetyl-alpha-D-galactosamine-binding positions include His-117, Arg-190, Lys-195, Val-246, and 266-274; that span reads EGLPTVLIE. Arg-190 is a binding site for substrate.

This sequence belongs to the glycosyltransferase group 1 family.

It localises to the cell inner membrane. It catalyses the reaction N-acetyl-alpha-D-galactosaminyl-(1-&gt;4)-N-acetyl-alpha-D-galactosaminyl-(1-&gt;3)-N,N'-diacetyl-alpha-D-bacillosaminyl-tri-trans,heptacis-undecaprenyl diphosphate + 3 UDP-N-acetyl-alpha-D-galactosamine = [alpha-D-GalNAc-(1-&gt;4)]4-alpha-D-GalNAc-(1-&gt;3)-alpha-D-diNAcBac-tri-trans,hepta-cis-undecaprenyl diphosphate + 3 UDP + 3 H(+). The protein operates within protein modification; protein glycosylation. In terms of biological role, processive glycosyltransferase that is part of the biosynthetic pathway of the lipid-linked oligosaccharide (LLO) that serves as the glycan donor in bacterial protein N-glycosylation. Catalyzes the transfer of exactly three alpha-(1-&gt;4)-N-acetylgalactosamine (GalNAc) units to the growing LLO precursor, GalNAc-alpha-(1-&gt;4)-GalNAc-alpha-(1-&gt;3)-diNAcBac-PP-undecaprenyl. Cannot accept UDP-GlcNAc as substrate. This Campylobacter jejuni subsp. jejuni serotype O:2 (strain ATCC 700819 / NCTC 11168) protein is GalNAc-alpha-(1-&gt;4)-GalNAc-alpha-(1-&gt;3)-diNAcBac-PP-undecaprenol alpha-1,4-N-acetyl-D-galactosaminyltransferase.